The chain runs to 539 residues: MIO-dependent tyrosine 2,3-aminomutase (539 aa).

Y63 acts as the Proton donor/acceptor in catalysis. H93 is a binding site for substrate. The segment at residues 152-154 (ASG) is a cross-link (5-imidazolinone (Ala-Gly)). At S153 the chain carries 2,3-didehydroalanine (Ser). The substrate site is built by N205 and R311.

Belongs to the TAL/TAM family. In terms of assembly, homotetramer; dimer of dimers. Contains an active site 4-methylidene-imidazol-5-one (MIO), which is formed autocatalytically by cyclization and dehydration of residues Ala-Ser-Gly.

The enzyme catalyses L-tyrosine = 3-amino-3-(4-hydroxyphenyl)propanoate. It carries out the reaction L-tyrosine = (E)-4-coumarate + NH4(+). Functionally, involved in the biosynthesis of the enediyne antitumor antibiotic C-1027. Catalyzes the MIO-dependent deamination of L-tyrosine generating the corresponding alpha,beta-unsaturated acid, (S)-beta-tyrosine. The polypeptide is MIO-dependent tyrosine 2,3-aminomutase (Streptomyces globisporus).